Consider the following 814-residue polypeptide: Plakophilin-2 (814 aa).

The tract at residues 1 to 329 (MAIPGSLGEC…MTLERAVNML (329 aa)) is required for binding to single-stranded DNA. The residue at position 44 (Ser44) is a Phosphoserine. Arg46 is modified (omega-N-methylarginine). Ser82 and Ser130 each carry phosphoserine. ARM repeat units lie at residues 200–240 (TCQH…SIKG), 309–352 (CDCL…ESFQ), 354–393 (SEARKRVNQLQGIPKLLQLLKVQNEDVQRAVCGALRNLVF), 503–549 (PDGR…NLSY), 604–644 (PRGI…NLTA), 652–691 (SVARMVVQKENGLQHTRKMLHVGDPSVKKTAVSLLRNLSR), 696–737 (QNEI…NLMQ), and 740–782 (YQNA…SLWA).

It belongs to the beta-catenin family. In terms of assembly, interacts with DSC2. Interacts with JUP. Interacts with KRT5/CK5, KRT8/CK8, KRT14/CK14, KRT18/CK18 and VIM. Interacts (via N-terminus) with MARK3/C-TAK1. Interacts with DSP. Interacts with DSG1, DSG2 and DSG3. Interacts (via N-terminus) with CTNNB1. Interacts with CDH1. Interacts with the RNA polymerase III (Pol III) complex proteins POLR3A/RPC155, POLR3F/RPC39 and POLR3C/RPC82. Interacts with CTNNA3. Interacts (via N-terminus) with SCN5A/Nav1.5. Interacts with ANK3/ANKG and GJA1/CX43. In terms of tissue distribution, expressed in the heart (at protein level).

The protein resides in the nucleus. Its subcellular location is the cell junction. It localises to the desmosome. The protein localises to the cytoplasm. Functionally, a component of desmosome cell-cell junctions which are required for positive regulation of cellular adhesion. Regulates focal adhesion turnover resulting in changes in focal adhesion size, cell adhesion and cell spreading, potentially via transcriptional modulation of beta-integrins. Required to maintain gingival epithelial barrier function. Important component of the desmosome that is also required for localization of desmosome component proteins such as DSC2, DSG2 and JUP to the desmosome cell-cell junction. Required for the formation of desmosome cell junctions in cardiomyocytes, thereby required for the correct formation of the heart, specifically trabeculation and formation of the atria walls. Loss of desmosome cell junctions leads to mis-localization of DSP and DSG2 resulting in disruption of cell-cell adhesion and disordered intermediate filaments. Modulates profibrotic gene expression in cardiomyocytes via regulation of DSP expression and subsequent activation of downstream TGFB1 and MAPK14/p38 MAPK signaling. Required for cardiac sodium current propagation and electrical synchrony in cardiac myocytes, via ANK3 stabilization and modulation of SCN5A/Nav1.5 localization to cell-cell junctions. Required for mitochondrial function, nuclear envelope integrity and positive regulation of SIRT3 transcription via maintaining DES localization at its nuclear envelope and cell tip anchoring points, and thereby preserving regulation of the transcriptional program. Maintenance of nuclear envelope integrity protects against DNA damage and transcriptional dysregulation of genes, especially those involved in the electron transport chain, thereby preserving mitochondrial function and protecting against superoxide radical anion generation. Binds single-stranded DNA (ssDNA). May regulate the localization of GJA1 to gap junctions in intercalated disks of the heart. The polypeptide is Plakophilin-2 (Rattus norvegicus (Rat)).